The chain runs to 310 residues: Tagatose-6-phosphate kinase (310 aa).

The protein belongs to the carbohydrate kinase PfkB family. LacC subfamily.

It catalyses the reaction D-tagatofuranose 6-phosphate + ATP = D-tagatofuranose 1,6-bisphosphate + ADP + H(+). It participates in carbohydrate metabolism; D-tagatose 6-phosphate degradation; D-glyceraldehyde 3-phosphate and glycerone phosphate from D-tagatose 6-phosphate: step 1/2. The protein is Tagatose-6-phosphate kinase of Staphylococcus aureus (strain USA300 / TCH1516).